We begin with the raw amino-acid sequence, 82 residues long: RNA-binding protein Hfq (82 aa).

A Sm domain is found at 10–70; sequence DIFLNGARKN…LSTITPSKAI (61 aa).

This sequence belongs to the Hfq family. As to quaternary structure, homohexamer.

Functionally, RNA chaperone that binds small regulatory RNA (sRNAs) and mRNAs to facilitate mRNA translational regulation in response to envelope stress, environmental stress and changes in metabolite concentrations. Also binds with high specificity to tRNAs. This Clostridium kluyveri (strain NBRC 12016) protein is RNA-binding protein Hfq.